The primary structure comprises 414 residues: Transforming growth factor beta-2 proprotein (414 aa).

Residues 1–20 (MHYCVLSTFLLLHLVPVALS) form the signal peptide. 3 N-linked (GlcNAc...) asparagine glycosylation sites follow: Asn-72, Asn-140, and Asn-241. 4 cysteine pairs are disulfide-bonded: Cys-309-Cys-318, Cys-317-Cys-380, Cys-346-Cys-411, and Cys-350-Cys-413.

Belongs to the TGF-beta family. In terms of assembly, interacts with the serine proteases, HTRA1 and HTRA3. Interacts with ASPN. Interacts with MFAP5. Interacts with Transforming growth factor beta-2 (TGF-beta-2) chain; interaction is non-covalent and maintains (TGF-beta-2) in a latent state. Interacts with LRRC32/GARP; leading to regulate activation of TGF-beta-2. Interacts with NREP; the interaction results in a decrease in TGFB2 autoinduction. As to quaternary structure, transforming growth factor beta-2: Homodimer; disulfide-linked. Transforming growth factor beta-2: Interacts with TGF-beta receptors (TGFBR1 and TGFBR2), leading to signal transduction. The precursor proprotein is cleaved in the Golgi apparatus to form Transforming growth factor beta-2 (TGF-beta-2) and Latency-associated peptide (LAP) chains, which remain non-covalently linked, rendering TGF-beta-2 inactive.

The protein resides in the secreted. Its subcellular location is the extracellular space. It is found in the extracellular matrix. Functionally, precursor of the Latency-associated peptide (LAP) and Transforming growth factor beta-2 (TGF-beta-2) chains, which constitute the regulatory and active subunit of TGF-beta-2, respectively. Required to maintain the Transforming growth factor beta-2 (TGF-beta-2) chain in a latent state during storage in extracellular matrix. Associates non-covalently with TGF-beta-2 and regulates its activation via interaction with 'milieu molecules', such as LTBP1 and LRRC32/GARP, that control activation of TGF-beta-2. Its function is as follows. Multifunctional protein that regulates various processes such as angiogenesis and heart development. Activation into mature form follows different steps: following cleavage of the proprotein in the Golgi apparatus, Latency-associated peptide (LAP) and Transforming growth factor beta-2 (TGF-beta-2) chains remain non-covalently linked rendering TGF-beta-2 inactive during storage in extracellular matrix. At the same time, LAP chain interacts with 'milieu molecules', such as LTBP1 and LRRC32/GARP, that control activation of TGF-beta-2 and maintain it in a latent state during storage in extracellular milieus. Once activated following release of LAP, TGF-beta-2 acts by binding to TGF-beta receptors (TGFBR1 and TGFBR2), which transduce signal. The protein is Transforming growth factor beta-2 proprotein (Tgfb2) of Mus musculus (Mouse).